A 356-amino-acid polypeptide reads, in one-letter code: Activating signal cointegrator 1 complex subunit 1 (356 aa).

Residues 1–52 (MDVLRPQIVTFDGRNYRKNPIQEKQYQHEEDEDFYPDSMEYSDEPCGAYEVA) form a required for interaction with ASCC3 region. Residues 57–119 (GFRATVSAPS…NGVVSARTRI (63 aa)) enclose the KH domain.

Identified in the ASCC complex that contains ASCC1, ASCC2 and ASCC3. Interacts directly with ASCC3. The ASCC complex interacts with ALKBH3. Part of the ASC-1 complex, that contains TRIP4, ASCC1, ASCC2 and ASCC3. Interacts with CSRP1. Interacts with ZCCHC4. As to expression, expressed in the spinal cord, brain, paraspinal ganglia, thyroid, and submandibular glands.

Its subcellular location is the nucleus. It is found in the nucleus speckle. In terms of biological role, plays a role in DNA damage repair as component of the ASCC complex. Part of the ASC-1 complex that enhances NF-kappa-B, SRF and AP1 transactivation. In cells responding to gastrin-activated paracrine signals, it is involved in the induction of SERPINB2 expression by gastrin. May also play a role in the development of neuromuscular junction. In Mus musculus (Mouse), this protein is Activating signal cointegrator 1 complex subunit 1 (Ascc1).